The sequence spans 95 residues: Small ribosomal subunit protein bS6 (95 aa).

This sequence belongs to the bacterial ribosomal protein bS6 family.

Its function is as follows. Binds together with bS18 to 16S ribosomal RNA. This chain is Small ribosomal subunit protein bS6, found in Aster yellows witches'-broom phytoplasma (strain AYWB).